Reading from the N-terminus, the 195-residue chain is HTH-type transcriptional regulator BetI (195 aa).

The region spanning 8–68 (SIRRRQLIDA…ATMRDITSQL (61 aa)) is the HTH tetR-type domain. Positions 31–50 (TIAQIARRAGVSTGIISHYF) form a DNA-binding region, H-T-H motif.

Its pathway is amine and polyamine biosynthesis; betaine biosynthesis via choline pathway [regulation]. In terms of biological role, repressor involved in the biosynthesis of the osmoprotectant glycine betaine. It represses transcription of the choline transporter BetT and the genes of BetAB involved in the synthesis of glycine betaine. The chain is HTH-type transcriptional regulator BetI from Escherichia coli O157:H7.